A 144-amino-acid polypeptide reads, in one-letter code: uncharacterized protein (144 aa).

Residues 98-127 (PLADGATVDSQASENGEKEAQPTPPKEGLL) are disordered.

This is an uncharacterized protein from Aedes vexans (Inland floodwater mosquito).